We begin with the raw amino-acid sequence, 369 residues long: Pyruvate dehydrogenase E1 component subunit alpha (369 aa).

As to quaternary structure, heterodimer of an alpha and a beta chain. Thiamine diphosphate serves as cofactor.

It carries out the reaction N(6)-[(R)-lipoyl]-L-lysyl-[protein] + pyruvate + H(+) = N(6)-[(R)-S(8)-acetyldihydrolipoyl]-L-lysyl-[protein] + CO2. The pyruvate dehydrogenase complex catalyzes the overall conversion of pyruvate to acetyl-CoA and CO(2). It contains multiple copies of three enzymatic components: pyruvate dehydrogenase (E1), dihydrolipoamide acetyltransferase (E2) and lipoamide dehydrogenase (E3). The sequence is that of Pyruvate dehydrogenase E1 component subunit alpha (pdhA) from Geobacillus stearothermophilus (Bacillus stearothermophilus).